The sequence spans 137 residues: Basic phospholipase A2 homolog Ts-R6 (137 aa).

The N-terminal stretch at 1 to 16 (MRTLWIMAVLLLGVEG) is a signal peptide. 7 disulfides stabilise this stretch: C42-C130, C44-C60, C59-C110, C65-C137, C66-C103, C73-C97, and C91-C101.

Expressed by the venom gland.

Its subcellular location is the secreted. In terms of biological role, snake venom phospholipase A2 homolog that induces local edema a few hours after injection (5-10 ug) in the hind paw and shows weak anticoagulant and myotoxic activities. In Trimeresurus stejnegeri (Chinese green tree viper), this protein is Basic phospholipase A2 homolog Ts-R6.